The chain runs to 607 residues: Zinc finger protein 750 (607 aa).

Residues 25 to 51 (YQCFQCPFTCNIKSHLFNHMKYNLCKN) form a CCHC-type zinc finger. 4 residues coordinate Zn(2+): Cys27, Cys30, His43, and Cys49. The segment covering 60-78 (MEQTGKASRASQHSPAFSH) has biased composition (polar residues). Disordered regions lie at residues 60 to 133 (MEQT…DKSE), 318 to 467 (RAVQ…SSQE), 482 to 511 (QALP…QDLE), and 575 to 607 (GQKR…SQNC). 2 stretches are compositionally biased toward basic and acidic residues: residues 79-133 (NSKE…DKSE) and 318-334 (RAVQ…RESP). Residues 369-380 (HSGSQSHIISGS) are compositionally biased toward low complexity. Over residues 421-432 (DKEEDEETEEEI) the composition is skewed to acidic residues. Residues 452 to 462 (HYPDRELHYDS) show a composition bias toward basic and acidic residues. Positions 496–507 (ISNAEVSTTESP) are enriched in polar residues. The segment covering 579–592 (ANNRPLRHTNKRAK) has biased composition (basic residues).

The protein resides in the nucleus. Functionally, transcription factor involved in epidermis differentiation. This chain is Zinc finger protein 750 (znf750), found in Danio rerio (Zebrafish).